The following is a 984-amino-acid chain: Probable beta-galactosidase C (984 aa).

A signal peptide spans 1–23; that stretch reads MRLLSFIYLVWLALLTGTPQVSA. Substrate contacts are provided by Tyr-82, Asn-127, Ala-128, Glu-129, and Asn-187. Glu-188 (proton donor) is an active-site residue. Asn-197 carries an N-linked (GlcNAc...) asparagine glycan. Tyr-251 is a substrate binding site. Cys-257 and Cys-304 are oxidised to a cystine. Residue Asn-276 is glycosylated (N-linked (GlcNAc...) asparagine). The active-site Nucleophile is the Glu-287. Tyr-353 serves as a coordination point for substrate. N-linked (GlcNAc...) asparagine glycosylation is found at Asn-391, Asn-421, Asn-434, Asn-517, Asn-602, Asn-677, Asn-715, Asn-720, Asn-759, and Asn-805.

Belongs to the glycosyl hydrolase 35 family.

The protein resides in the secreted. It carries out the reaction Hydrolysis of terminal non-reducing beta-D-galactose residues in beta-D-galactosides.. In terms of biological role, cleaves beta-linked terminal galactosyl residues from gangliosides, glycoproteins, and glycosaminoglycans. The chain is Probable beta-galactosidase C (lacC) from Aspergillus flavus (strain ATCC 200026 / FGSC A1120 / IAM 13836 / NRRL 3357 / JCM 12722 / SRRC 167).